The chain runs to 361 residues: Phospho-N-acetylmuramoyl-pentapeptide-transferase (361 aa).

The next 10 membrane-spanning stretches (helical) occupy residues 17–37 (SIYLRAFLGFVISFCIVLFAG), 66–86 (GTPTMGGVLIIAAVLLTSIFI), 90–110 (TNSLILLVLLSTIMFAAIGFI), 129–149 (LLFQGAIGLIIWAYIYFIGLT), 162–182 (ISAYPYYIGAIGLFFLIQIVL), 197–217 (GLAIMPMIICSTILGVIAYFT), 232–252 (VGSGELSVFLSAVTGAGLGFL), 261–281 (IFMGDTGSLTLGGILGVIAII), 286–306 (LMLPIMGFIFVLEALSVILQV), and 340–360 (FWIGTLIFGIIALGAIKMRGI).

The protein belongs to the glycosyltransferase 4 family. MraY subfamily. Mg(2+) serves as cofactor.

The protein localises to the cell inner membrane. The catalysed reaction is UDP-N-acetyl-alpha-D-muramoyl-L-alanyl-gamma-D-glutamyl-meso-2,6-diaminopimeloyl-D-alanyl-D-alanine + di-trans,octa-cis-undecaprenyl phosphate = di-trans,octa-cis-undecaprenyl diphospho-N-acetyl-alpha-D-muramoyl-L-alanyl-D-glutamyl-meso-2,6-diaminopimeloyl-D-alanyl-D-alanine + UMP. It functions in the pathway cell wall biogenesis; peptidoglycan biosynthesis. Functionally, catalyzes the initial step of the lipid cycle reactions in the biosynthesis of the cell wall peptidoglycan: transfers peptidoglycan precursor phospho-MurNAc-pentapeptide from UDP-MurNAc-pentapeptide onto the lipid carrier undecaprenyl phosphate, yielding undecaprenyl-pyrophosphoryl-MurNAc-pentapeptide, known as lipid I. This Fusobacterium nucleatum subsp. nucleatum (strain ATCC 25586 / DSM 15643 / BCRC 10681 / CIP 101130 / JCM 8532 / KCTC 2640 / LMG 13131 / VPI 4355) protein is Phospho-N-acetylmuramoyl-pentapeptide-transferase.